We begin with the raw amino-acid sequence, 54 residues long: ATP synthase F(0) complex subunit 8 (54 aa).

The chain crosses the membrane as a helical span at residues 13 to 35 (ALSLWVCFPLMMLSLSSFLPLTL).

This sequence belongs to the ATPase protein 8 family. In terms of assembly, component of the ATP synthase complex composed at least of ATP5F1A/subunit alpha, ATP5F1B/subunit beta, ATP5MC1/subunit c (homooctomer), MT-ATP6/subunit a, MT-ATP8/subunit 8, ATP5ME/subunit e, ATP5MF/subunit f, ATP5MG/subunit g, ATP5MK/subunit k, ATP5MJ/subunit j, ATP5F1C/subunit gamma, ATP5F1D/subunit delta, ATP5F1E/subunit epsilon, ATP5PF/subunit F6, ATP5PB/subunit b, ATP5PD/subunit d, ATP5PO/subunit OSCP. ATP synthase complex consists of a soluble F(1) head domain (subunits alpha(3) and beta(3)) - the catalytic core - and a membrane F(0) domain - the membrane proton channel (subunits c, a, 8, e, f, g, k and j). These two domains are linked by a central stalk (subunits gamma, delta, and epsilon) rotating inside the F1 region and a stationary peripheral stalk (subunits F6, b, d, and OSCP).

It localises to the mitochondrion membrane. Subunit 8, of the mitochondrial membrane ATP synthase complex (F(1)F(0) ATP synthase or Complex V) that produces ATP from ADP in the presence of a proton gradient across the membrane which is generated by electron transport complexes of the respiratory chain. ATP synthase complex consist of a soluble F(1) head domain - the catalytic core - and a membrane F(1) domain - the membrane proton channel. These two domains are linked by a central stalk rotating inside the F(1) region and a stationary peripheral stalk. During catalysis, ATP synthesis in the catalytic domain of F(1) is coupled via a rotary mechanism of the central stalk subunits to proton translocation. In vivo, can only synthesize ATP although its ATP hydrolase activity can be activated artificially in vitro. Part of the complex F(0) domain. In Myxine glutinosa (Atlantic hagfish), this protein is ATP synthase F(0) complex subunit 8.